The sequence spans 1119 residues: MSFLDSVLKAFVGDKSKKDVKEIQPIVNKIKALESEFEALSLDELRAKTSEFKAKIAEATKEVEDKIVALNKEADEIDDITRKEDIYAEVDALKEKSYEISEAVLNDILPEAFATVKETAKRFVNNTQLKVKASSFDREISAEKDYVTLEDDHAIWSNSWDAAGKPVTWDMVHYDVQLIGGVAMHQGKIAEMQTGEGKTLVATLPMYLNALTGNGVHLVTVNDYLAKRDSAWMAPIFQFHGMSVDCVDYHRPNSAARRKAYNADITYGTNNEFGFDYLRDNMSHAPDDLVQRPHNYAIVDEVDSVLVDDARTPLIISGPVPKGDTHEFMELKPAIANIVEVQRKHLVKVLSEAKKLIKEGDTKEGGFQLLRVYRGLPKNKALIKFLSEEGIKQLLQKTENHYMQDNNREMPKVDAELYFTIEEKSNQIDLTDKGIEFLSGKDEPDFFVMPEIGMEIAKIEKEGFPAEEEAEKKEELFRDYSVKSERIHTLRQLLKSYTLFEKDTEYVVIDNKVKIVDEQTGRIMEGRRYSDGLHQAIEAKENVKIEDATQTFATVTLQNYFRMYGKLSGMTGTAVTEAGELWEIYKLDVVEIPTNRPIARNDKEDLVYKTKREKYNAVIDHVTDLSNAGRPVLIGTTSVEISELLSRMLKLRNVPHNVLNAKRHKQEADIVAEAGNSGIVTIATNMAGRGTDIKLSKEVKEAGGLAIVGTERHDSRRVDRQLRGRAGRQGDPGSSQFYVSLEDNLMRLFGSERIAKLMDRMGLEEGEVIQHSMISKSIERAQKKVEENNFGVRKRLLEYDDVMNAQREVIYKRRYHALFGERLRVDLANMIFDISESITETNKAAEDFKNFEFELIRNFSMSSPVSEEEFKKMNAQKLAGEVYKSAYKHYDEKMSHNAERAFPVIKQVHEDERNNFERISVPFTDGTKTLSVVTNLEKAYETEGKQLIKDFEKNITLAIIDDAWKTHLRKMDELKQSVQLAVHEQKDPLLIYKFEAFELFKVMLENVNRDVMSFLFKGEIPSTGAPSIHEARQTKSKEKVETRKEEIPNMDERAAQSRAAGNTQRQQPEVTETIVRDRPKIGRNDKVTVKNVMSGESKTMKFKQAIPLLDKGDWVLVEE.

ATP contacts are provided by residues glutamine 177, 195 to 199 (GEGKT), and aspartate 692. Positions 1025-1081 (APSIHEARQTKSKEKVETRKEEIPNMDERAAQSRAAGNTQRQQPEVTETIVRDRPKI) are disordered. Over residues 1029–1055 (HEARQTKSKEKVETRKEEIPNMDERAA) the composition is skewed to basic and acidic residues. Over residues 1059 to 1070 (AAGNTQRQQPEV) the composition is skewed to polar residues.

Belongs to the SecA family. As to quaternary structure, monomer and homodimer. Part of the essential Sec protein translocation apparatus which comprises SecA, SecYEG and auxiliary proteins SecDF. Other proteins may also be involved.

Its subcellular location is the cell inner membrane. It is found in the cytoplasm. It carries out the reaction ATP + H2O + cellular proteinSide 1 = ADP + phosphate + cellular proteinSide 2.. Its function is as follows. Part of the Sec protein translocase complex. Interacts with the SecYEG preprotein conducting channel. Has a central role in coupling the hydrolysis of ATP to the transfer of proteins into and across the cell membrane, serving as an ATP-driven molecular motor driving the stepwise translocation of polypeptide chains across the membrane. This Christiangramia forsetii (strain DSM 17595 / CGMCC 1.15422 / KT0803) (Gramella forsetii) protein is Protein translocase subunit SecA.